We begin with the raw amino-acid sequence, 383 residues long: Adaptive-response sensory kinase SasA (383 aa).

The 214-residue stretch at 152-365 (MVAHELRTPL…CFTFNVPIWQ (214 aa)) folds into the Histidine kinase domain. Histidine 155 carries the phosphohistidine; by autocatalysis modification.

In terms of assembly, homooligomerizes. Interacts with KaiC. Participates in the KaiABC clock complex, whose core is composed of a KaiC homohexamer, 6 KaiB and up to 6 KaiA dimers. SasA and KaiB(fs) compete to bind to KaiC.

The catalysed reaction is ATP + protein L-histidine = ADP + protein N-phospho-L-histidine.. Member of the two-component regulatory system SasA/RpaA involved in genome-wide circadian gene expression. One of several clock output pathways. Participates in the Kai clock protein complex, the main circadian regulator in cyanobacteria, via its interaction with KaiC. KaiC enhances the autophosphorylation activity of SasA, which then transfers its phosphate group to RpaA to activate it. In addition to its output function, recruits fold-shifted KaiB (KaiB(fs)) to KaiC to cooperatively form the KaiB(6):KaiC(6) complex (independent of SasA kinase activity). Required for robustness of the circadian rhythm of gene expression and is involved in clock output, also required for adaptation to light/dark cycles. This Synechococcus sp. (strain CC9311) protein is Adaptive-response sensory kinase SasA.